Consider the following 166-residue polypeptide: Large ribosomal subunit protein uL10 (166 aa).

It belongs to the universal ribosomal protein uL10 family. As to quaternary structure, part of the ribosomal stalk of the 50S ribosomal subunit. The N-terminus interacts with L11 and the large rRNA to form the base of the stalk. The C-terminus forms an elongated spine to which L12 dimers bind in a sequential fashion forming a multimeric L10(L12)X complex.

Its function is as follows. Forms part of the ribosomal stalk, playing a central role in the interaction of the ribosome with GTP-bound translation factors. This chain is Large ribosomal subunit protein uL10, found in Streptococcus pyogenes serotype M28 (strain MGAS6180).